The chain runs to 89 residues: Large ribosomal subunit protein bL27 (89 aa).

The segment at 1-21 is disordered; sequence MAHKKAGGSSRNGRDSESKRL.

The protein belongs to the bacterial ribosomal protein bL27 family.

The polypeptide is Large ribosomal subunit protein bL27 (Bartonella quintana (strain Toulouse) (Rochalimaea quintana)).